Reading from the N-terminus, the 130-residue chain is Larval cuticle protein 1 (130 aa).

The first 16 residues, 1–16, serve as a signal peptide directing secretion; it reads MFKFVMICAVLGLAVA. In terms of domain architecture, Chitin-binding type R&amp;R spans 43 to 104; that stretch reads ADGFDSSLHT…PSGAWIPTPP (62 aa).

Component of the larval cuticle. The polypeptide is Larval cuticle protein 1 (Lcp1) (Drosophila melanogaster (Fruit fly)).